Reading from the N-terminus, the 301-residue chain is Fatty acid elongase 3 (301 aa).

The next 7 membrane-spanning stretches (helical) occupy residues 31–51 (VPYI…KSIM), 64–84 (IVWN…TVPY), 122–142 (ALAD…LFAL), 161–181 (VIFL…FAYV), 187–207 (GLWF…YYFV), 219–239 (FAPI…IVVC), and 257–277 (FSLH…SQLF). A HxxHH motif motif is present at residues 165–169 (HWYHH). The Nucleophile role is filled by histidine 168.

This sequence belongs to the ELO family.

The protein resides in the endoplasmic reticulum membrane. The catalysed reaction is an acyl-CoA + malonyl-CoA + H(+) = a 3-oxoacyl-CoA + CO2 + CoA. It functions in the pathway lipid metabolism; fatty acid biosynthesis. Involved in the synthesis of fatty acids. Elongates C14 fatty acids to C18. The sequence is that of Fatty acid elongase 3 from Trypanosoma brucei brucei (strain 927/4 GUTat10.1).